An 83-amino-acid chain; its full sequence is Small ribosomal subunit protein bS18 (83 aa).

The protein belongs to the bacterial ribosomal protein bS18 family. Part of the 30S ribosomal subunit. Forms a tight heterodimer with protein bS6.

In terms of biological role, binds as a heterodimer with protein bS6 to the central domain of the 16S rRNA, where it helps stabilize the platform of the 30S subunit. The polypeptide is Small ribosomal subunit protein bS18 (Methylobacterium radiotolerans (strain ATCC 27329 / DSM 1819 / JCM 2831 / NBRC 15690 / NCIMB 10815 / 0-1)).